The primary structure comprises 558 residues: Phosphatidylserine lipase ABHD16A (558 aa).

Helical transmembrane passes span 60–80 (ILAL…FAFF) and 93–113 (VVPF…VACL). The Cytoplasmic segment spans residues 114–558 (RGIGRWTNPQ…AQNFQMPWHL (445 aa)). Residues 281–407 (LVICCEGNAG…LVTRTVRQHL (127 aa)) enclose the AB hydrolase-1 domain. Active-site charge relay system residues include Ser355, Asp430, and His507.

This sequence belongs to the AB hydrolase superfamily. ABHD16 family.

Its subcellular location is the membrane. It carries out the reaction 1-heptadecanoyl-2-(5Z,8Z,11Z,14Z-eicosatetraenoyl)-sn-glycero-3-phosphoserine + H2O = 1-heptadecanoyl-sn-glycero-3-phosphoserine + (5Z,8Z,11Z,14Z)-eicosatetraenoate + H(+). The enzyme catalyses 1-hexadecanoyl-2-(9Z-octadecenoyl)-sn-glycero-3-phospho-L-serine + H2O = 1-hexadecanoyl-sn-glycero-3-phospho-L-serine + (9Z)-octadecenoate + H(+). It catalyses the reaction 1-octadecanoyl-2-(9Z,12Z-octadecadienoyl)-sn-glycero-3-phosphoserine + H2O = 1-octadecanoyl-sn-glycero-3-phosphoserine + (9Z,12Z)-octadecadienoate + H(+). The catalysed reaction is 1-heptadecanoyl-2-(5Z,8Z,11Z,14Z-eicosatetraenoyl)-sn-glycero-3-phosphocholine + H2O = 1-heptadecanoyl-sn-glycero-3-phosphocholine + (5Z,8Z,11Z,14Z)-eicosatetraenoate + H(+). It carries out the reaction 1-hexadecanoyl-2-(9Z-octadecenoyl)-sn-glycero-3-phosphoglycerol + H2O = 1-hexadecanoyl-sn-glycero-3-phosphoglycerol + (9Z)-octadecenoate + H(+). The enzyme catalyses 1-hexadecanoyl-2-(9Z-octadecenoyl)-sn-glycero-3-phospho-(1D-myo-inositol) + H2O = 1-hexadecanoyl-sn-glycero-3-phospho-(1D-myo-inositol) + (9Z)-octadecenoate + H(+). It catalyses the reaction 1-heptadecanoyl-2-(5Z,8Z,11Z,14Z-eicosatetraenoyl)-sn-glycero-3-phosphoethanolamine + H2O = 1-heptadecanoyl-sn-glycero-3-phosphoethanolamine + (5Z,8Z,11Z,14Z)-eicosatetraenoate + H(+). The catalysed reaction is 1-hexadecanoyl-2-(9Z-octadecenoyl)-sn-glycero-3-phospho-(1'-sn-glycerol) + H2O = 1-hexadecanoyl-sn-glycero-3-phospho-(1'-sn-glycerol) + (9Z)-octadecenoate + H(+). It carries out the reaction Hydrolyzes glycerol monoesters of long-chain fatty acids.. The enzyme catalyses 1-tetradecanoylglycerol + H2O = tetradecanoate + glycerol + H(+). It catalyses the reaction 2-hexadecanoylglycerol + H2O = glycerol + hexadecanoate + H(+). The catalysed reaction is 1-(9Z-octadecenoyl)-glycerol + H2O = glycerol + (9Z)-octadecenoate + H(+). It carries out the reaction 2-(9Z-octadecenoyl)-glycerol + H2O = glycerol + (9Z)-octadecenoate + H(+). The enzyme catalyses 2-(9Z,12Z-octadecadienoyl)-glycerol + H2O = (9Z,12Z)-octadecadienoate + glycerol + H(+). It catalyses the reaction 1-(5Z,8Z,11Z,14Z-eicosatetraenoyl)-glycerol + H2O = glycerol + (5Z,8Z,11Z,14Z)-eicosatetraenoate + H(+). The catalysed reaction is 2-(5Z,8Z,11Z,14Z-eicosatetraenoyl)-glycerol + H2O = glycerol + (5Z,8Z,11Z,14Z)-eicosatetraenoate + H(+). It carries out the reaction prostaglandin D2-1-glycerol ester + H2O = prostaglandin D2 + glycerol + H(+). The enzyme catalyses 2-glyceryl-15-deoxy-Delta(12,14)-prostaglandin J2 + H2O = 15-deoxy-Delta(12,14)-prostaglandin J2 + glycerol + H(+). It catalyses the reaction 1-(9Z,12Z-octadecadienoyl)-glycerol + H2O = (9Z,12Z)-octadecadienoate + glycerol + H(+). Phosphatidylserine (PS) lipase that mediates the hydrolysis of phosphatidylserine to generate lysophosphatidylserine (LPS). LPS constitutes a class of signaling lipids that regulates immunological and neurological processes. Has no activity towards diacylglycerol, triacylglycerol or lysophosphatidylserine lipase. Also has monoacylglycerol lipase activity, with preference for 1-(9Z,12Z-octadecadienoyl)-glycerol (1-LG) and 2-glyceryl-15-deoxy-Delta(12,14)-prostaglandin J2 (15d-PGJ(2)-G). This is Phosphatidylserine lipase ABHD16A from Pongo abelii (Sumatran orangutan).